We begin with the raw amino-acid sequence, 570 residues long: Urease subunit alpha (570 aa).

The Urease domain occupies Gly-131–Phe-570. Residues His-136, His-138, and Lys-219 each coordinate Ni(2+). Residue Lys-219 is modified to N6-carboxylysine. Substrate is bound at residue His-221. Ni(2+)-binding residues include His-248 and His-274. His-322 acts as the Proton donor in catalysis. Asp-362 lines the Ni(2+) pocket.

The protein belongs to the metallo-dependent hydrolases superfamily. Urease alpha subunit family. In terms of assembly, heterotrimer of UreA (gamma), UreB (beta) and UreC (alpha) subunits. Three heterotrimers associate to form the active enzyme. Ni cation is required as a cofactor. In terms of processing, carboxylation allows a single lysine to coordinate two nickel ions.

It localises to the cytoplasm. The catalysed reaction is urea + 2 H2O + H(+) = hydrogencarbonate + 2 NH4(+). It functions in the pathway nitrogen metabolism; urea degradation; CO(2) and NH(3) from urea (urease route): step 1/1. This Sinorhizobium fredii (strain NBRC 101917 / NGR234) protein is Urease subunit alpha.